An 816-amino-acid polypeptide reads, in one-letter code: Mechanosensitive cation channel TMEM63B (816 aa).

The Extracellular portion of the chain corresponds to 1 to 46 (MLPYVIATLGSAGSTCKASTCSNSTKDYCYSARIRSTVLQGLPFGG). Residues 47-71 (VPTVLALDFMCFLALLFVFSILRKV) traverse the membrane as a helical segment. S-palmitoyl cysteine attachment occurs at residues Cys-57 and Cys-119. Over 72–138 (AWDYGRLALV…KDDEIRDKCG (67 aa)) the chain is Cytoplasmic. Residues 139–171 (GDAVHYLSFQRHIIGLLVAVGVLSVGIVLPVNF) traverse the membrane as a helical segment. Topologically, residues 172–195 (SGDLLENNAYSFGRTTIANLNSGN) are extracellular. The helical transmembrane segment at 196–220 (NLLWLHTSFAFLYLLLTVYSMRRHT) threads the bilayer. At 221 to 420 (SKMRYKEDDL…IYWEHLSIRG (200 aa)) the chain is on the cytoplasmic side. An intracellular linker IL2; confers mechanosensitivity region spans residues 224-419 (RYKEDDLVKR…NIYWEHLSIR (196 aa)). Residues Cys-375 and Cys-391 are each lipidated (S-palmitoyl cysteine). Residues 421-450 (FIWWIRCLVINVVLFILLFFLTTPAIIITT) form a helical membrane-spanning segment. Topologically, residues 451–465 (MDKFNVTKPVEYLNN) are extracellular. A helical membrane pass occupies residues 466–495 (PIITQFFPTLLLWCFSALLPTIVYYSAFFE). Residues 496–499 (AHWT) lie on the Cytoplasmic side of the membrane. A helical transmembrane segment spans residues 500-536 (RSGENRTTMHKCYTFLIFMVLLLPSLGLSSLDVFFRW). Topologically, residues 537–559 (LFDKKFLAEAAVRFECVFLPDNG) are extracellular. A helical membrane pass occupies residues 560 to 592 (AFFVNYVIASAFIGNAMDLLRIPGLLMYMIRLC). The gating helix stretch occupies residues 560 to 592 (AFFVNYVIASAFIGNAMDLLRIPGLLMYMIRLC). The Cytoplasmic portion of the chain corresponds to 593 to 612 (LARSAAERRNVKRHQAYEFQ). A helical membrane pass occupies residues 613 to 631 (FGAAYAWMMCVFTVVMTYS). The Extracellular portion of the chain corresponds to 632-634 (ITC). A helical membrane pass occupies residues 635 to 659 (PIIVPFGLMYMLLKHLVDRYNLYYA). Over 660–666 (YLPAKLD) the chain is Cytoplasmic. Residues 667-695 (KKIHSGAVNQVVAAPILCLFWLLFFSTMR) traverse the membrane as a helical segment. The Extracellular portion of the chain corresponds to 696–700 (TGFLA). The helical transmembrane segment at 701 to 721 (PTSMFTFVVLVITIVICLCHV) threads the bilayer. S-palmitoyl cysteine attachment occurs at residues Cys-719 and Cys-722. Over 722–816 (CFGHFKYLSA…DSLIENEIRQ (95 aa)) the chain is Cytoplasmic.

It belongs to the CSC1 (TC 1.A.17) family. In terms of assembly, monomer. Post-translationally, palmitoylation is required for localization to the plasma membrane and stability.

Its subcellular location is the cell membrane. The protein localises to the lysosome membrane. It is found in the early endosome membrane. The catalysed reaction is Ca(2+)(in) = Ca(2+)(out). It carries out the reaction Mg(2+)(in) = Mg(2+)(out). The enzyme catalyses K(+)(in) = K(+)(out). It catalyses the reaction Na(+)(in) = Na(+)(out). The catalysed reaction is Cs(+)(in) = Cs(+)(out). Its function is as follows. Mechanosensitive cation channel with low conductance and high activation threshold. Osmosensitive cation channel preferentially activated by hypotonic stress. Also acts as a phospholipid scramblase in response to changes in membrane structure: upon changes in membrane curvature and thickness, alters its conformation and translocates phospholipids, thereby controlling plasma membrane lipid distribution. The sequence is that of Mechanosensitive cation channel TMEM63B from Gallus gallus (Chicken).